A 482-amino-acid polypeptide reads, in one-letter code: UDP-glucose 6-dehydrogenase 2 (482 aa).

NAD(+) is bound by residues 8 to 13 (GAGYVG), D33, R38, 86 to 90 (VNTPT), 127 to 128 (ST), and E163. Residues 159 to 163 (EFLAE), 218 to 225 (KLAANAFL), and 258 to 271 (RIGP…VGFG) each bind substrate. The active-site Nucleophile is the C274. 274-277 (CFQK) contributes to the NAD(+) binding site. Position 336–337 (336–337 (FK)) interacts with substrate. R344 contributes to the NAD(+) binding site. S395 is subject to Phosphoserine. R449 lines the substrate pocket.

Belongs to the UDP-glucose/GDP-mannose dehydrogenase family.

It carries out the reaction UDP-alpha-D-glucose + 2 NAD(+) + H2O = UDP-alpha-D-glucuronate + 2 NADH + 3 H(+). It functions in the pathway nucleotide-sugar biosynthesis; UDP-alpha-D-glucuronate biosynthesis; UDP-alpha-D-glucuronate from UDP-alpha-D-glucose: step 1/1. Involved in the biosynthesis of UDP-glucuronic acid (UDP-GlcA), providing nucleotide sugars for cell-wall polymers. The sequence is that of UDP-glucose 6-dehydrogenase 2 (UGD2) from Oryza sativa subsp. japonica (Rice).